Here is a 280-residue protein sequence, read N- to C-terminus: Transcription factor ovo-like homolog lin-48 (280 aa).

4 C2H2-type zinc fingers span residues 133-155 (LTCH…IKCH), 161-183 (YLCT…TRTH), 189-212 (YKCE…RKVH), and 228-251 (FVCE…KVVH).

Its subcellular location is the nucleus. Transcription factor. Involved in development of the hindgut, the male tail, and the excretory duct cell. Involved in modulating function of excretory duct cells. Plays a role in left/right patterning of cell fates in the hindgut. This chain is Transcription factor ovo-like homolog lin-48, found in Caenorhabditis elegans.